The sequence spans 118 residues: MICOS complex subunit MIC13 (118 aa).

Over 1 to 7 (MVARVWS) the chain is Mitochondrial matrix. A helical transmembrane segment spans residues 8–26 (LMRFLIKGSVAGGAVYLVY). Over 27–118 (DQELLGPSDK…GWEYVKARTK (92 aa)) the chain is Mitochondrial intermembrane.

It belongs to the MICOS complex subunit Mic13 family. In terms of assembly, component of the mitochondrial contact site and cristae organizing system (MICOS) complex, composed of at least MICOS10/MIC10, CHCHD3/MIC19, CHCHD6/MIC25, APOO/MIC26, MICOS13/MIC13, APOOL/MIC27 and IMMT/MIC60. The MICOS complex associates with mitochondrial outer membrane proteins SAMM50, MTX1 and MTX2 (together described as components of the mitochondrial outer membrane sorting assembly machinery (SAM) complex) and DNAJC11, mitochondrial inner membrane protein TMEM11 and with HSPA9. The MICOS and SAM complexes together with DNAJC11 are part of a large protein complex spanning both membranes termed the mitochondrial intermembrane space bridging (MIB) complex.

It localises to the mitochondrion inner membrane. In terms of biological role, component of the MICOS complex, a large protein complex of the mitochondrial inner membrane that plays crucial roles in the maintenance of crista junctions, inner membrane architecture, and formation of contact sites to the outer membrane. Constituent of mature MICOS complex, it is required for the formation of cristae junction (CJ) and maintenance of cristae morphology. Required for the incorporation of MICOS10/MIC10 into the MICOS complex. This is MICOS complex subunit MIC13 from Homo sapiens (Human).